We begin with the raw amino-acid sequence, 591 residues long: F420 non-reducing hydrogenase II large subunit (591 aa).

Glutamate 42 lines the Mg(2+) pocket. 4 residues coordinate Ni(2+): cysteine 61, cysteine 64, cysteine 569, and cysteine 572. Cysteine 64 is a binding site for Fe cation. Position 572 (cysteine 572) interacts with Fe cation. Histidine 575 is a binding site for Mg(2+).

The protein belongs to the [NiFe]/[NiFeSe] hydrogenase large subunit family. As to quaternary structure, composed of a large subunit (VhtA), a small subunit (VhtG) and a cytochrome subunit (VhtC). The cofactor is Ni(2+). Fe cation is required as a cofactor.

It localises to the cell membrane. The catalysed reaction is methanophenazine + H2 = dihydromethanophenazine. In terms of biological role, part of the F420 non-reducing hydrogenase II complex that catalyzes the reduction of methanophenazine to dihydromethanophenazine. The sequence is that of F420 non-reducing hydrogenase II large subunit from Methanosarcina mazei (strain ATCC BAA-159 / DSM 3647 / Goe1 / Go1 / JCM 11833 / OCM 88) (Methanosarcina frisia).